The sequence spans 310 residues: Probable cobalamin biosynthesis protein CobD (310 aa).

5 helical membrane-spanning segments follow: residues 53-73 (LVFGFITVFLTVFTVFLIFFT), 80-100 (LISNYYIKLFSYSLILSFSIG), 157-177 (DSIIAPLIYAAIFGLSGAFIY), 215-235 (IAGILLIISAPFYGGKIVPAI), and 289-309 (AVDYSVLLFLVIYMVLYFNLI).

The protein belongs to the CobD/CbiB family.

It is found in the cell membrane. It functions in the pathway cofactor biosynthesis; adenosylcobalamin biosynthesis. In terms of biological role, converts cobyric acid to cobinamide by the addition of aminopropanol on the F carboxylic group. The protein is Probable cobalamin biosynthesis protein CobD of Methanococcus vannielii (strain ATCC 35089 / DSM 1224 / JCM 13029 / OCM 148 / SB).